Reading from the N-terminus, the 279-residue chain is Biotin synthase (279 aa).

The region spanning 2-232 (VRNSRLDICS…NVTIKIAAGR (231 aa)) is the Radical SAM core domain. Residues C20, C24, and C27 each contribute to the [4Fe-4S] cluster site. [2Fe-2S] cluster-binding residues include C96, C156, and K227.

This sequence belongs to the radical SAM superfamily. Biotin synthase family. Homodimer. Requires [4Fe-4S] cluster as cofactor. The cofactor is [2Fe-2S] cluster.

The enzyme catalyses (4R,5S)-dethiobiotin + (sulfur carrier)-SH + 2 reduced [2Fe-2S]-[ferredoxin] + 2 S-adenosyl-L-methionine = (sulfur carrier)-H + biotin + 2 5'-deoxyadenosine + 2 L-methionine + 2 oxidized [2Fe-2S]-[ferredoxin]. Its pathway is cofactor biosynthesis; biotin biosynthesis; biotin from 7,8-diaminononanoate: step 2/2. Its function is as follows. Catalyzes the conversion of dethiobiotin (DTB) to biotin by the insertion of a sulfur atom into dethiobiotin via a radical-based mechanism. This chain is Biotin synthase, found in Thermotoga neapolitana (strain ATCC 49049 / DSM 4359 / NBRC 107923 / NS-E).